We begin with the raw amino-acid sequence, 101 residues long: MIGLSHYLTVAAILFTLGVLGIFINRKNIIVILMSVELILLAVNINLVAFSAYLGDIVGQVFALFVLTVAAAEAAIGLAILVVFFRNRGSIAVEDVNMMKG.

The next 3 membrane-spanning stretches (helical) occupy residues 4–24 (LSHY…GIFI), 29–49 (IIVI…NLVA), and 65–85 (FVLT…VVFF).

This sequence belongs to the complex I subunit 4L family. NDH-1 is composed of 14 different subunits. Subunits NuoA, H, J, K, L, M, N constitute the membrane sector of the complex.

Its subcellular location is the cell inner membrane. It catalyses the reaction a quinone + NADH + 5 H(+)(in) = a quinol + NAD(+) + 4 H(+)(out). NDH-1 shuttles electrons from NADH, via FMN and iron-sulfur (Fe-S) centers, to quinones in the respiratory chain. The immediate electron acceptor for the enzyme in this species is believed to be ubiquinone. Couples the redox reaction to proton translocation (for every two electrons transferred, four hydrogen ions are translocated across the cytoplasmic membrane), and thus conserves the redox energy in a proton gradient. In Methylobacterium nodulans (strain LMG 21967 / CNCM I-2342 / ORS 2060), this protein is NADH-quinone oxidoreductase subunit K.